The chain runs to 138 residues: Basic phospholipase A2 homolog Vur-S49 (138 aa).

An N-terminal signal peptide occupies residues 1–16 (MRALWIVAVCLIGVEG). Disulfide bonds link Cys-42–Cys-131, Cys-44–Cys-60, Cys-59–Cys-111, Cys-65–Cys-138, Cys-66–Cys-104, Cys-73–Cys-97, and Cys-91–Cys-102. Residues 121 to 133 (KKYKVYLRFKCKG) form an important for membrane-damaging activities in eukaryotes and bacteria; heparin-binding region.

This sequence belongs to the phospholipase A2 family. Group II subfamily. S49 sub-subfamily. Expressed by the venom gland.

It localises to the secreted. Its function is as follows. Snake venom phospholipase A2 homolog that lacks enzymatic activity. Is able to suppress the acetylcholine (ACh)-evoked current mediated by alpha-7 (CHRNA7)-similar nAChRs in L.stagnalis neurons (IC(50)=2.18 uM). This activity is only partially reversible and seems to be non-competitive. The chain is Basic phospholipase A2 homolog Vur-S49 from Vipera renardi (Steppe viper).